Consider the following 264-residue polypeptide: Proliferating cell nuclear antigen 2 (264 aa).

This sequence belongs to the PCNA family. Homotrimer. Oligomer. Interacts with ORC1 (via PIP-box motif). Interacts with FEN1.

The protein localises to the nucleus. Its subcellular location is the chromosome. The protein resides in the cytoplasm. May be involved in DNA damage response. Appears not to be involved in DNA replication in trophozoites. This chain is Proliferating cell nuclear antigen 2, found in Plasmodium falciparum (isolate 3D7).